Consider the following 271-residue polypeptide: Short-chain dehydrogenase ptmH (271 aa).

The NADP(+) site is built by isoleucine 8, threonine 34, lysine 40, aspartate 56, asparagine 84, tyrosine 148, lysine 152, valine 181, and threonine 183. Tyrosine 148 serves as the catalytic Proton acceptor. The Lowers pKa of active site Tyr role is filled by lysine 152.

This sequence belongs to the short-chain dehydrogenases/reductases (SDR) family.

It participates in secondary metabolite biosynthesis. In terms of biological role, short-chain dehydrogenase; part of the gene cluster that mediates the biosynthesis of the indole diterpenes penitrems. The geranylgeranyl diphosphate (GGPP) synthase ptmG catalyzes the first step in penitrem biosynthesis via conversion of farnesyl pyrophosphate and isopentyl pyrophosphate into geranylgeranyl pyrophosphate (GGPP). Condensation of indole-3-glycerol phosphate with GGPP by the prenyl transferase ptmC then forms 3-geranylgeranylindole (3-GGI). Epoxidation by the FAD-dependent monooxygenase ptmM leads to a epoxidized-GGI that is substrate of the terpene cyclase ptmB for cyclization to yield paspaline. Paspaline is subsequently converted to 13-desoxypaxilline by the cytochrome P450 monooxygenase ptmP, the latter being then converted to paxilline by the cytochrome P450 monooxygenase ptmQ. Paxilline is converted to beta-paxitriol via C-10 ketoreduction by the short-chain dehydrogenase ptmH which can be monoprenylated at the C-20 by the indole diterpene prenyltransferase ptmD. A two-step elimination (acetylation and elimination) process performed by the O-acetyltransferase ptmV and ptmI leads to the production of the prenylated form of penijanthine. The FAD-linked oxidoreductase ptmO then converts the prenylated form of penijanthine into PC-M5 which is in turn transformed into PC-M4 by the aromatic dimethylallyltransferase ptmE. Five sequential oxidative transformations performed by the cytochrome P450 monooxygenases ptmK, ptmU, ptmL, ptmN and ptmJ yield the various penitrem compounds. PtmK, ptmU and ptmM are involved in the formation of the key bicyclic ring of penitrem C via the formation of the intermediates secopenitrem D and penitrem D. PtmL catalyzes the epoxidation of penitrem D and C to yield penitrem B and F, respectively. PtmJ catalyzes the last benzylic hydroxylation to convert penitrem B to prenitrem E and penitrem F to penitrem A. This is Short-chain dehydrogenase ptmH from Penicillium ochrochloron.